Here is a 377-residue protein sequence, read N- to C-terminus: MSTSTKRCYYETLEVERDADESKLKSSFRKLAMKFHPDRNPGDDTSEVKFKEINEAYEVLKDKDKRAAYDRFGHAAFEQGGPGGGAGFGAGFASSFSDIFEDLFGMAGQRGRGGRERGADLRYNMEITLEEAFGGKTAQIEIPVSVTCEACSGIGAKAGTKPKTCSTCGGAGRVRQSQGFFTLERTCPGCQGRGQMIEDACPSCSGQGRVTRERTLSVNIPQGVEDGTRIRLAGEGEAGVRGGPPGDLYIFLSLAQHQFFQRDGADLHCRVPISMVTAALGGEFEVPTIEKGKAKVKVPAGTQSNRRFRIASKGMPVLRSRQTGDMYVQVVVETPQNLTKKQQELLAEFEKLSSGNTQPESEGFFTKVKDFFGSRAN.

Positions 8–73 constitute a J domain; that stretch reads CYYETLEVER…DKRAAYDRFG (66 aa). Residues 135-213 form a CR-type zinc finger; it reads GKTAQIEIPV…CSGQGRVTRE (79 aa). Residues C148, C151, C165, C168, C187, C190, C201, and C204 each coordinate Zn(2+). CXXCXGXG motif repeat units lie at residues 148–155, 165–172, 187–194, and 201–208; these read CEACSGIG, CSTCGGAG, CPGCQGRG, and CPSCSGQG.

It belongs to the DnaJ family. In terms of assembly, homodimer. Zn(2+) serves as cofactor.

It localises to the cytoplasm. Its function is as follows. Participates actively in the response to hyperosmotic and heat shock by preventing the aggregation of stress-denatured proteins and by disaggregating proteins, also in an autonomous, DnaK-independent fashion. Unfolded proteins bind initially to DnaJ; upon interaction with the DnaJ-bound protein, DnaK hydrolyzes its bound ATP, resulting in the formation of a stable complex. GrpE releases ADP from DnaK; ATP binding to DnaK triggers the release of the substrate protein, thus completing the reaction cycle. Several rounds of ATP-dependent interactions between DnaJ, DnaK and GrpE are required for fully efficient folding. Also involved, together with DnaK and GrpE, in the DNA replication of plasmids through activation of initiation proteins. In Bradyrhizobium diazoefficiens (strain JCM 10833 / BCRC 13528 / IAM 13628 / NBRC 14792 / USDA 110), this protein is Chaperone protein DnaJ.